A 548-amino-acid polypeptide reads, in one-letter code: Chaperonin GroEL (548 aa).

Residues 29–32, Lys50, 86–90, Gly414, 478–480, and Asp494 each bind ATP; these read TMGP, DGTTT, and NAA.

This sequence belongs to the chaperonin (HSP60) family. In terms of assembly, forms a cylinder of 14 subunits composed of two heptameric rings stacked back-to-back. Interacts with the co-chaperonin GroES.

The protein resides in the cytoplasm. The catalysed reaction is ATP + H2O + a folded polypeptide = ADP + phosphate + an unfolded polypeptide.. In terms of biological role, together with its co-chaperonin GroES, plays an essential role in assisting protein folding. The GroEL-GroES system forms a nano-cage that allows encapsulation of the non-native substrate proteins and provides a physical environment optimized to promote and accelerate protein folding. Its function is as follows. May play a protective role against the defense mechanisms generated by the infected macrophages. The polypeptide is Chaperonin GroEL (Legionella pneumophila subsp. pneumophila (strain Philadelphia 1 / ATCC 33152 / DSM 7513)).